The following is a 965-amino-acid chain: Receptor-like protein 15 (965 aa).

Residues 1-23 form the signal peptide; it reads MEGKVFLGHNLIWVMLLMGQLHG. Over 24–916 the chain is Extracellular; it reads YKSCIDEEKI…GVEADESIID (893 aa). Residues Asn57, Asn95, Asn109, and Asn145 are each glycosylated (N-linked (GlcNAc...) asparagine). LRR repeat units follow at residues 80-102, 103-127, 131-154, 156-179, 180-204, 206-230, 243-267, 268-290, 292-315, 316-341, 342-365, 366-389, 391-415, 417-435, 437-461, 462-485, and 487-512; these read EISF…LHPF, EDVR…GYKS, LRKL…FLSA, TSLT…ELRD, LTNL…ELSS, RKLK…KFCT, LNNM…LTSL, TGLR…SLGS, QSLE…SLAN, LSNL…SWKP, KFQL…LLHQ, KDLR…LLAN, TKLK…AHNL, FLDV…NIGW, FPHL…LGNM, NGIQ…FVNG, and YSMA…NFTN. A glycan (N-linked (GlcNAc...) asparagine) is linked at Asn194. An N-linked (GlcNAc...) asparagine glycan is attached at Asn315. N-linked (GlcNAc...) asparagine glycans are attached at residues Asn377 and Asn389. An N-linked (GlcNAc...) asparagine glycan is attached at Asn444. Asn509 is a glycosylation site (N-linked (GlcNAc...) asparagine). An LRR 18; degenerate repeat occupies 514–533; it reads LGLFMDNNLFTGKIGQGLRS. 11 LRR repeats span residues 534–557, 558–582, 584–606, 608–627, 628–652, 654–674, 675–698, 778–801, 802–825, 827–850, and 851–875; these read LINL…WIGE, LPSL…LFNK, SLQL…HDSR, GVVL…DTLL, ANVE…NIQN, SILL…LCGL, SNIQ…LSNT, LKLL…EFGG, LLEL…SISS, EKME…LTEL, and TSLS…QFNT. 2 N-linked (GlcNAc...) asparagine glycosylation sites follow: Asn546 and Asn581. 4 N-linked (GlcNAc...) asparagine glycosylation sites follow: Asn652, Asn662, Asn688, and Asn697. 2 N-linked (GlcNAc...) asparagine glycosylation sites follow: Asn809 and Asn814. Residues Asn862, Asn893, and Asn898 are each glycosylated (N-linked (GlcNAc...) asparagine). The chain crosses the membrane as a helical span at residues 917–937; that stretch reads MVSFYLSFAAAYVTILIGILA. The Cytoplasmic portion of the chain corresponds to 938-965; it reads SLSFDSPWSRFWFYKVDAFIKKVRNLLL.

It belongs to the RLP family.

The protein localises to the cell membrane. The chain is Receptor-like protein 15 from Arabidopsis thaliana (Mouse-ear cress).